Consider the following 387-residue polypeptide: Cysteine desulfurase IscS (387 aa).

Pyridoxal 5'-phosphate is bound by residues 73-74 (AT), Asn155, Gln183, and 203-205 (SAH). An N6-(pyridoxal phosphate)lysine modification is found at Lys206. Thr241 serves as a coordination point for pyridoxal 5'-phosphate. Cys328 acts as the Cysteine persulfide intermediate in catalysis. Cys328 contacts [2Fe-2S] cluster.

The protein belongs to the class-V pyridoxal-phosphate-dependent aminotransferase family. NifS/IscS subfamily. As to quaternary structure, homodimer. Forms a heterotetramer with IscU, interacts with other sulfur acceptors. It depends on pyridoxal 5'-phosphate as a cofactor.

It localises to the cytoplasm. It carries out the reaction (sulfur carrier)-H + L-cysteine = (sulfur carrier)-SH + L-alanine. The protein operates within cofactor biosynthesis; iron-sulfur cluster biosynthesis. In terms of biological role, master enzyme that delivers sulfur to a number of partners involved in Fe-S cluster assembly, tRNA modification or cofactor biosynthesis. Catalyzes the removal of elemental sulfur atoms from cysteine to produce alanine. Functions as a sulfur delivery protein for Fe-S cluster synthesis onto IscU, an Fe-S scaffold assembly protein, as well as other S acceptor proteins. This Helicobacter pylori (strain J99 / ATCC 700824) (Campylobacter pylori J99) protein is Cysteine desulfurase IscS.